Reading from the N-terminus, the 466-residue chain is Sucrose-6-phosphate hydrolase (466 aa).

Residues 38 to 41, Gln57, 100 to 101, 159 to 160, and Glu218 each bind substrate; these read LLND, YS, and RD. Residue Asp41 is part of the active site.

Its subcellular location is the cytoplasm. It carries out the reaction Hydrolysis of terminal non-reducing beta-D-fructofuranoside residues in beta-D-fructofuranosides.. Its pathway is glycan biosynthesis; sucrose metabolism. Functionally, hydrolyzes sucrose and sucrose-6P, but fails to hydrolyze any of the phosphorylated isomers of sucrose and other phospho-D-glucosides, including maltose-6'P and trehalose-6P. In Klebsiella pneumoniae, this protein is Sucrose-6-phosphate hydrolase (scrB).